We begin with the raw amino-acid sequence, 313 residues long: D-alanine--D-alanine ligase (313 aa).

Positions 108-308 constitute an ATP-grasp domain; the sequence is KLVWQQLGIP…YQELVVGVLA (201 aa). 138–193 is a binding site for ATP; it reads VAKLGLPLFVKPASEGSSVAVIKVKSADALPAALIEAVKYDKIVVVEKSVEGGGEY. Positions 262, 275, and 277 each coordinate Mg(2+).

Belongs to the D-alanine--D-alanine ligase family. Mg(2+) is required as a cofactor. Requires Mn(2+) as cofactor.

It localises to the cytoplasm. The catalysed reaction is 2 D-alanine + ATP = D-alanyl-D-alanine + ADP + phosphate + H(+). The protein operates within cell wall biogenesis; peptidoglycan biosynthesis. Functionally, cell wall formation. The chain is D-alanine--D-alanine ligase from Paraburkholderia phytofirmans (strain DSM 17436 / LMG 22146 / PsJN) (Burkholderia phytofirmans).